A 215-amino-acid polypeptide reads, in one-letter code: uncharacterized protein (215 aa).

This is an uncharacterized protein from Acanthamoeba polyphaga mimivirus (APMV).